A 432-amino-acid chain; its full sequence is Glutamyl-tRNA reductase (432 aa).

Substrate contacts are provided by residues 50 to 53, Ser-110, 115 to 117, and Gln-121; these read TCNR and ETQ. Cys-51 acts as the Nucleophile in catalysis. An NADP(+)-binding site is contributed by 190–195; the sequence is GVGEMS.

Belongs to the glutamyl-tRNA reductase family. In terms of assembly, homodimer.

The catalysed reaction is (S)-4-amino-5-oxopentanoate + tRNA(Glu) + NADP(+) = L-glutamyl-tRNA(Glu) + NADPH + H(+). The protein operates within porphyrin-containing compound metabolism; protoporphyrin-IX biosynthesis; 5-aminolevulinate from L-glutamyl-tRNA(Glu): step 1/2. In terms of biological role, catalyzes the NADPH-dependent reduction of glutamyl-tRNA(Glu) to glutamate 1-semialdehyde (GSA). The chain is Glutamyl-tRNA reductase from Sulfurimonas denitrificans (strain ATCC 33889 / DSM 1251) (Thiomicrospira denitrificans (strain ATCC 33889 / DSM 1251)).